Reading from the N-terminus, the 350-residue chain is Biotin synthase (350 aa).

The region spanning 38–256 is the Radical SAM core domain; that stretch reads NHVQVSTLLS…IAIARIMMPQ (219 aa). [4Fe-4S] cluster-binding residues include Cys-53, Cys-57, and Cys-60. Residues Cys-97, Cys-128, Cys-188, and Arg-260 each contribute to the [2Fe-2S] cluster site.

This sequence belongs to the radical SAM superfamily. Biotin synthase family. In terms of assembly, homodimer. Requires [4Fe-4S] cluster as cofactor. [2Fe-2S] cluster is required as a cofactor.

The catalysed reaction is (4R,5S)-dethiobiotin + (sulfur carrier)-SH + 2 reduced [2Fe-2S]-[ferredoxin] + 2 S-adenosyl-L-methionine = (sulfur carrier)-H + biotin + 2 5'-deoxyadenosine + 2 L-methionine + 2 oxidized [2Fe-2S]-[ferredoxin]. Its pathway is cofactor biosynthesis; biotin biosynthesis; biotin from 7,8-diaminononanoate: step 2/2. Functionally, catalyzes the conversion of dethiobiotin (DTB) to biotin by the insertion of a sulfur atom into dethiobiotin via a radical-based mechanism. The sequence is that of Biotin synthase from Vibrio parahaemolyticus serotype O3:K6 (strain RIMD 2210633).